We begin with the raw amino-acid sequence, 260 residues long: Tryptophan 2,3-dioxygenase (260 aa).

Substrate contacts are provided by residues 34 to 38 (FIVIH) and Arg-100. His-219 provides a ligand contact to heme. A substrate-binding site is contributed by Thr-233.

Belongs to the tryptophan 2,3-dioxygenase family. As to quaternary structure, homotetramer. Heme serves as cofactor.

It catalyses the reaction L-tryptophan + O2 = N-formyl-L-kynurenine. It participates in amino-acid degradation; L-tryptophan degradation via kynurenine pathway; L-kynurenine from L-tryptophan: step 1/2. Its function is as follows. Heme-dependent dioxygenase that catalyzes the oxidative cleavage of the L-tryptophan (L-Trp) pyrrole ring and converts L-tryptophan to N-formyl-L-kynurenine. Catalyzes the oxidative cleavage of the indole moiety. In Herpetosiphon aurantiacus (strain ATCC 23779 / DSM 785 / 114-95), this protein is Tryptophan 2,3-dioxygenase.